The chain runs to 150 residues: Large ribosomal subunit protein uL15 (150 aa).

The tract at residues 18-43 is disordered; sequence IVGRGSSSGWGKTSGKGHKGQQARSG.

Belongs to the universal ribosomal protein uL15 family. In terms of assembly, part of the 50S ribosomal subunit.

In terms of biological role, binds to the 23S rRNA. This is Large ribosomal subunit protein uL15 from Treponema denticola (strain ATCC 35405 / DSM 14222 / CIP 103919 / JCM 8153 / KCTC 15104).